Reading from the N-terminus, the 63-residue chain is Conotoxin Vi5.1b (63 aa).

A signal peptide spans methionine 1–serine 22. Residues glutamine 23 to serine 50 constitute a propeptide that is removed on maturation. Proline amide is present on proline 62.

Belongs to the conotoxin T superfamily. In terms of processing, contains 2 disulfide bonds that can be either 'C1-C3, C2-C4' or 'C1-C4, C2-C3', since these disulfide connectivities have been observed for conotoxins with cysteine framework V (for examples, see AC P0DQQ7 and AC P81755). As to expression, expressed by the venom duct.

Its subcellular location is the secreted. The protein is Conotoxin Vi5.1b of Conus virgo (Virgin cone).